The sequence spans 387 residues: Histone deacetylase 2 (387 aa).

The histone deacetylase stretch occupies residues 73 to 382 (KVSIIYSSSY…IENLSRQGLI (310 aa)). Catalysis depends on His-201, which acts as the Proton donor/acceptor. The Zn(2+) site is built by Asp-238, His-240, and Asp-318.

It belongs to the histone deacetylase family. HD type 3 subfamily. The cofactor is Zn(2+).

Its subcellular location is the nucleus. The catalysed reaction is N(6)-acetyl-L-lysyl-[histone] + H2O = L-lysyl-[histone] + acetate. In terms of biological role, responsible for the deacetylation of lysine residues on the N-terminal part of the core histones (H2A, H2B, H3 and H4). Histone deacetylation gives a tag for epigenetic repression and plays an important role in transcriptional regulation, cell cycle progression and developmental events. Histone deacetylases act via the formation of large multiprotein complexes. The polypeptide is Histone deacetylase 2 (HDA2) (Arabidopsis thaliana (Mouse-ear cress)).